Here is a 61-residue protein sequence, read N- to C-terminus: LECHNQQSSQTPTTKTCSGETNCYKKWWSDHRGTIIERGCGCPKVKPGVNLNCCRRDRCNN.

4 cysteine pairs are disulfide-bonded: C3–C23, C17–C40, C42–C53, and C54–C59.

The protein belongs to the three-finger toxin family. Short-chain subfamily. Type I alpha-neurotoxin sub-subfamily. In terms of tissue distribution, expressed by the venom gland.

The protein localises to the secreted. Produces peripheral paralysis by blocking neuromuscular transmission at the postsynaptic site. Binds to the nicotinic acetylcholine receptor. The polypeptide is Cobrotoxin-b (Naja kaouthia (Monocled cobra)).